Consider the following 563-residue polypeptide: Heat shock 70 kDa protein 8 (563 aa).

Positions 1–25 (MAEAAYTVASDSENTGEEKSSSSPS) are disordered. An N-acetylalanine modification is found at Ala-2.

Belongs to the heat shock protein 70 (TC 1.A.33) family. DnaK subfamily.

Functionally, in cooperation with other chaperones, Hsp70s are key components that facilitate folding of de novo synthesized proteins, assist translocation of precursor proteins into organelles, and are responsible for degradation of damaged protein under stress conditions. This is Heat shock 70 kDa protein 8 (HSP70-8) from Arabidopsis thaliana (Mouse-ear cress).